Reading from the N-terminus, the 415-residue chain is NAD-dependent protein deacetylase hst4 (415 aa).

The tract at residues 1–26 is disordered; it reads MKVEEHVPLIQESRKRKCQSSENASK. A Deacetylase sirtuin-type domain is found at 40–337; it reads TGNENVDLSP…RRLKPLLDAP (298 aa). Residues 65–84 and 153–156 each bind NAD(+); these read GAGI…EGLF and QNID. H184 (proton acceptor) is an active-site residue. Zn(2+)-binding residues include C192, C195, C214, and C217. NAD(+) is bound by residues 273-275, 303-305, and L323; these read GTS and NYD.

Belongs to the sirtuin family. Class I subfamily. Zn(2+) is required as a cofactor.

Its subcellular location is the nucleus. It is found in the nucleolus. It catalyses the reaction N(6)-acetyl-L-lysyl-[protein] + NAD(+) + H2O = 2''-O-acetyl-ADP-D-ribose + nicotinamide + L-lysyl-[protein]. Functionally, NAD-dependent histone deacetylase, which contributes to both telomeric and centromeric silencing, proper cell cycle progression, DNA damage control, recombination, and genomic maintenance. The sequence is that of NAD-dependent protein deacetylase hst4 (hst4) from Schizosaccharomyces pombe (strain 972 / ATCC 24843) (Fission yeast).